Consider the following 107-residue polypeptide: Large ribosomal subunit protein uL24 (107 aa).

Belongs to the universal ribosomal protein uL24 family. Part of the 50S ribosomal subunit.

Its function is as follows. One of two assembly initiator proteins, it binds directly to the 5'-end of the 23S rRNA, where it nucleates assembly of the 50S subunit. One of the proteins that surrounds the polypeptide exit tunnel on the outside of the subunit. The protein is Large ribosomal subunit protein uL24 of Streptomyces avermitilis (strain ATCC 31267 / DSM 46492 / JCM 5070 / NBRC 14893 / NCIMB 12804 / NRRL 8165 / MA-4680).